The sequence spans 99 residues: Large ribosomal subunit protein bL21 (99 aa).

It belongs to the bacterial ribosomal protein bL21 family. Part of the 50S ribosomal subunit. Contacts protein L20.

Functionally, this protein binds to 23S rRNA in the presence of protein L20. In Mesoplasma florum (strain ATCC 33453 / NBRC 100688 / NCTC 11704 / L1) (Acholeplasma florum), this protein is Large ribosomal subunit protein bL21.